The primary structure comprises 556 residues: Acetyl-coenzyme A thioesterase (556 aa).

The HotDog ACOT-type 1 domain occupies alanine 6 to glycine 118. Lysine 34 carries the N6-succinyllysine modification. CoA-binding positions include threonine 54 to serine 56 and serine 83 to serine 85. Residue lysine 97 is modified to N6-succinyllysine. Arginine 145 is a CoA binding site. 2 positions are modified to N6-succinyllysine: lysine 160 and lysine 229. The region spanning methionine 180 to glutamine 295 is the HotDog ACOT-type 2 domain. Lysine 235–arginine 237 contacts CoA. Residues glycine 327–alanine 536 enclose the START domain.

As to quaternary structure, homodimer or homotetramer.

Its subcellular location is the cytoplasm. The protein resides in the cytosol. The catalysed reaction is acetyl-CoA + H2O = acetate + CoA + H(+). It catalyses the reaction butanoyl-CoA + H2O = butanoate + CoA + H(+). It carries out the reaction hexanoyl-CoA + H2O = hexanoate + CoA + H(+). The protein operates within lipid metabolism; fatty acid metabolism. Its activity is regulated as follows. Allosterically regulated by ATP (activator) and ADP (inhibitor). Cold labile, it dissociates into inactive monomers at low temperature. Functionally, catalyzes the hydrolysis of acyl-CoAs into free fatty acids and coenzyme A (CoASH), regulating their respective intracellular levels. Preferentially hydrolyzes acetyl-CoA. The polypeptide is Acetyl-coenzyme A thioesterase (Acot12) (Mus musculus (Mouse)).